A 418-amino-acid chain; its full sequence is MTSTLPTANTPDPASLMPSVRPEAHGRYGRYGGQYVPETLMPALAELEQAAAEAWKDSAFTTELNRLLKSYVGRATPLYEAERLSAHYRRSDGGPRIWLKREDLNHTGAHKINNALGQALLALRMGKKRIIAETGAGQHGVATATVCARFGLECVVYMGAEDMRRQALNVFRMRLLGATVQAVTAGTATLKDATSEAIRDWVTNVETTHYILGSVAGPHPYPMLVRDFHAVIGNEAREQCKESFGRLPDVLLACVGGGSNAMGLFHPFVQDTSVRLIGVEAAGDGVATGRHAATITEGRVGVLHGAMSLLLQDQDGQVQEAHSISAGLDYPGVGPEHSYLRDIGRAEYGAVTDDEAITALRLVSELEGIIPALETAHAFAWLEMLCPTLPNGSEIVINCSGRGDKDVNTVAEKLGNQL.

The span at methionine 1–aspartate 12 shows a compositional bias: polar residues. The disordered stretch occupies residues methionine 1 to arginine 21. Lysine 111 bears the N6-(pyridoxal phosphate)lysine mark.

Belongs to the TrpB family. As to quaternary structure, tetramer of two alpha and two beta chains. Requires pyridoxal 5'-phosphate as cofactor.

It catalyses the reaction (1S,2R)-1-C-(indol-3-yl)glycerol 3-phosphate + L-serine = D-glyceraldehyde 3-phosphate + L-tryptophan + H2O. It functions in the pathway amino-acid biosynthesis; L-tryptophan biosynthesis; L-tryptophan from chorismate: step 5/5. Functionally, the beta subunit is responsible for the synthesis of L-tryptophan from indole and L-serine. This Synechococcus sp. (strain CC9311) protein is Tryptophan synthase beta chain.